A 555-amino-acid polypeptide reads, in one-letter code: High-affinity gluconate transporter ght3 (555 aa).

Residues 1–9 (MNRFITSIL) lie on the Cytoplasmic side of the membrane. Residues 10–30 (VVFISMSGWLQGADTGSISGI) form a helical membrane-spanning segment. Residues 31-58 (LGMRDFQSRFADRYNPISNSYSYSAWRQ) lie on the Extracellular side of the membrane. A helical membrane pass occupies residues 59–79 (ALLTGTINAGCLFGAMLSSPF). Residues 80 to 87 (TERIGKKY) lie on the Cytoplasmic side of the membrane. The chain crosses the membrane as a helical span at residues 88–108 (SICFFSGVYIIAELLLVTAVP). Residues 109–112 (SWIQ) are Extracellular-facing. The helical transmembrane segment at 113–133 (VLVGKILAGVGIGALSVLSPG) threads the bilayer. Residues 134–144 (YQSEVAPPQIR) lie on the Cytoplasmic side of the membrane. The helical transmembrane segment at 145–165 (GAVVATYQIFSTGAALVAACI) threads the bilayer. Residues 166 to 179 (NMGTHKLRKTASWR) lie on the Extracellular side of the membrane. Residues 180-200 (TSFGINMLWGILLMVGVLFLP) traverse the membrane as a helical segment. The Cytoplasmic portion of the chain corresponds to 201-266 (ESPRYLIYKG…IFGKDIRYRT (66 aa)). Residues 267-285 (CLGFLVMLFRELIGNNYYF) form a helical membrane-spanning segment. At 286 to 301 (YYATQVFKGTGMTDIF) the chain is on the extracellular side. A helical membrane pass occupies residues 302 to 322 (LPAVILGAINFGTTFGALYTI). The Cytoplasmic portion of the chain corresponds to 323-328 (DNLGRR). Residues 329–349 (NPLIFGAAFQSICFFIYAAVG) form a helical membrane-spanning segment. Residues 350–363 (DRKLIYKNGTSDHR) are Extracellular-facing. Residue Asn-357 is glycosylated (N-linked (GlcNAc...) asparagine). Residues 364–384 (AGSVMIVFSCLFLFSYCCSWG) form a helical membrane-spanning segment. Over 385 to 404 (PMGWVIVGETFPIRYRSKCA) the chain is Cytoplasmic. Residues 405–425 (SVATSGNWLGNFMISFFTPFI) form a helical membrane-spanning segment. Topologically, residues 426-432 (NNAIGFK) are extracellular. The helical transmembrane segment at 433-453 (LGYIYACINLFSSFMIFFLAK) threads the bilayer. Topologically, residues 454–555 (ETKGLTLEEV…FSEDSHPTYI (102 aa)) are cytoplasmic. Over residues 492-509 (KEEEKREREKSKGIRGQE) the composition is skewed to basic and acidic residues. The disordered stretch occupies residues 492-555 (KEEEKREREK…FSEDSHPTYI (64 aa)). Acidic residues predominate over residues 510–521 (EEFIENADEDNN). Low complexity predominate over residues 522–534 (DSSSSSGSVVSAV). Residues 545–555 (RFSEDSHPTYI) show a composition bias toward basic and acidic residues.

This sequence belongs to the major facilitator superfamily. Sugar transporter (TC 2.A.1.1) family.

The protein resides in the membrane. Its function is as follows. High-affinity gluconate transporter. The sequence is that of High-affinity gluconate transporter ght3 (ght3) from Schizosaccharomyces pombe (strain 972 / ATCC 24843) (Fission yeast).